Consider the following 357-residue polypeptide: sn-glycerol-3-phosphate import ATP-binding protein UgpC (357 aa).

The 232-residue stretch at Leu4–Ile235 folds into the ABC transporter domain. Gly37–Ser44 is an ATP binding site.

Belongs to the ABC transporter superfamily. sn-glycerol-3-phosphate importer (TC 3.A.1.1.3) family. In terms of assembly, the complex is composed of two ATP-binding proteins (UgpC), two transmembrane proteins (UgpA and UgpE) and a solute-binding protein (UgpB).

The protein localises to the cell inner membrane. It catalyses the reaction sn-glycerol 3-phosphate(out) + ATP + H2O = sn-glycerol 3-phosphate(in) + ADP + phosphate + H(+). In terms of biological role, part of the ABC transporter complex UgpBAEC involved in sn-glycerol-3-phosphate (G3P) import. Responsible for energy coupling to the transport system. The chain is sn-glycerol-3-phosphate import ATP-binding protein UgpC from Yersinia pestis bv. Antiqua (strain Antiqua).